A 638-amino-acid chain; its full sequence is Methyl-accepting chemotaxis protein McpQ (638 aa).

A helical transmembrane segment spans residues 18–38; sequence LGLGFGLVLLLTLAITLTGWH. The HBM domain maps to 45–282; sequence DRGDKLGNIS…SQTEVRDAAA (238 aa). Residues 287-307 traverse the membrane as a helical segment; that stretch reads TLLTVATVLALALGLLAAWAI. The HAMP domain occupies 309-361; that stretch reads RQIIIPLRQTLRAAERVASGDLTQSLQVQRRDELGQLQASMHRMTQGLRELIG. The region spanning 366–602 is the Methyl-accepting transducer domain; sequence GVTQIASAAE…EINRSVMNVR (237 aa).

This sequence belongs to the methyl-accepting chemotaxis (MCP) protein family.

Its subcellular location is the cell membrane. Its function is as follows. Chemotactic-signal transducers respond to changes in the concentration of attractants and repellents in the environment, transduce a signal from the outside to the inside of the cell, and facilitate sensory adaptation through the variation of the level of methylation. McpQ recognizes specifically citrate and citrate/metal(2+) complexes. Binds citrate/metal(2+) complexes with higher affinity than free citrate, and mediates preferentially chemotaxis toward citrate/metal(2+) complexes. The polypeptide is Methyl-accepting chemotaxis protein McpQ (Pseudomonas putida (strain ATCC 47054 / DSM 6125 / CFBP 8728 / NCIMB 11950 / KT2440)).